The chain runs to 365 residues: Cobalt-precorrin-5B C(1)-methyltransferase (365 aa).

The protein belongs to the CbiD family.

The enzyme catalyses Co-precorrin-5B + S-adenosyl-L-methionine = Co-precorrin-6A + S-adenosyl-L-homocysteine. Its pathway is cofactor biosynthesis; adenosylcobalamin biosynthesis; cob(II)yrinate a,c-diamide from sirohydrochlorin (anaerobic route): step 6/10. In terms of biological role, catalyzes the methylation of C-1 in cobalt-precorrin-5B to form cobalt-precorrin-6A. The polypeptide is Cobalt-precorrin-5B C(1)-methyltransferase (Pseudomonas fluorescens (strain Pf0-1)).